A 208-amino-acid chain; its full sequence is ATP-dependent Clp protease proteolytic subunit 2 (208 aa).

The Nucleophile role is filled by S102. The active site involves H127.

Belongs to the peptidase S14 family. Fourteen ClpP subunits assemble into 2 heptameric rings which stack back to back to give a disk-like structure with a central cavity, resembling the structure of eukaryotic proteasomes.

Its subcellular location is the cytoplasm. The enzyme catalyses Hydrolysis of proteins to small peptides in the presence of ATP and magnesium. alpha-casein is the usual test substrate. In the absence of ATP, only oligopeptides shorter than five residues are hydrolyzed (such as succinyl-Leu-Tyr-|-NHMec, and Leu-Tyr-Leu-|-Tyr-Trp, in which cleavage of the -Tyr-|-Leu- and -Tyr-|-Trp bonds also occurs).. Cleaves peptides in various proteins in a process that requires ATP hydrolysis. Has a chymotrypsin-like activity. Plays a major role in the degradation of misfolded proteins. This Chelativorans sp. (strain BNC1) protein is ATP-dependent Clp protease proteolytic subunit 2.